Here is a 377-residue protein sequence, read N- to C-terminus: tRNA-specific 2-thiouridylase MnmA (377 aa).

Residues 22–29 (GMSGGVDS) and methionine 48 each bind ATP. The interaction with target base in tRNA stretch occupies residues 108–110 (NPD). Cysteine 113 acts as the Nucleophile in catalysis. Cysteine 113 and cysteine 210 are oxidised to a cystine. Glycine 138 provides a ligand contact to ATP. The interaction with tRNA stretch occupies residues 160–162 (KDQ). The active-site Cysteine persulfide intermediate is cysteine 210. The tract at residues 322-323 (RY) is interaction with tRNA.

It belongs to the MnmA/TRMU family.

Its subcellular location is the cytoplasm. It carries out the reaction S-sulfanyl-L-cysteinyl-[protein] + uridine(34) in tRNA + AH2 + ATP = 2-thiouridine(34) in tRNA + L-cysteinyl-[protein] + A + AMP + diphosphate + H(+). Its function is as follows. Catalyzes the 2-thiolation of uridine at the wobble position (U34) of tRNA, leading to the formation of s(2)U34. The chain is tRNA-specific 2-thiouridylase MnmA from Shewanella amazonensis (strain ATCC BAA-1098 / SB2B).